Consider the following 430-residue polypeptide: Terminal nucleotidyltransferase 5B (430 aa).

The tract at residues 1 to 46 (MMPSESETESRDRAAAQVGTAAAAAVAKAAPAGGGPDPEASSASLG) is disordered. Residues 15–44 (AAQVGTAAAAAVAKAAPAGGGPDPEASSAS) show a composition bias toward low complexity.

It belongs to the TENT family.

The protein localises to the cytoplasm. Its subcellular location is the nucleus. It carries out the reaction RNA(n) + ATP = RNA(n)-3'-adenine ribonucleotide + diphosphate. Catalyzes the transfer of one adenosine molecule from an ATP to an mRNA poly(A) tail bearing a 3'-OH terminal group in an ATP hydrolysis-dependent manner. May be involved in maintaining the translation efficiency of at least some genes through preventing degradation of their mRNAs. Prefers RNA molecules that are adenosine-rich close to 3'-end. In addition, may inhibit cell proliferation and cell cycle progression through ubiquitination of beta-catenin/CTNNB1. This is Terminal nucleotidyltransferase 5B from Bos taurus (Bovine).